The chain runs to 340 residues: Alcohol dehydrogenase patD (340 aa).

Residue Cys46 participates in Zn(2+) binding. Residue His47 participates in NAD(+) binding. Zn(2+) is bound by residues His67, Glu68, Cys101, Cys104, Cys112, and Cys154. His67 contributes to the substrate binding site. Residues 178–183, 198–203, Lys206, 265–267, 289–291, and 297–299 contribute to the NAD(+) site; these read GLGGLG, VALSRD, LSI, PSG, and EDA.

This sequence belongs to the zinc-containing alcohol dehydrogenase family. It depends on Zn(2+) as a cofactor.

Its subcellular location is the cytoplasm. The protein localises to the cytosol. It catalyses the reaction neopatulin + NADPH + H(+) = (E)-ascladiol + NADP(+). Its pathway is mycotoxin biosynthesis; patulin biosynthesis. Its function is as follows. Alcohol dehydrogenase; part of the gene cluster that mediates the biosynthesis of patulin, an acetate-derived tetraketide mycotoxin produced by several fungal species that shows antimicrobial properties against several bacteria. PatD catalyzes the conversion of neopatulin into E-ascladiol. The pathway begins with the synthesis of 6-methylsalicylic acid by the polyketide synthase (PKS) patK via condensation of acetate and malonate units. The 6-methylsalicylic acid decarboxylase patG then catalyzes the decarboxylation of 6-methylsalicylic acid to yield m-cresol (also known as 3-methylphenol). These first reactions occur in the cytosol. The intermediate m-cresol is then transported into the endoplasmic reticulum where the cytochrome P450 monooxygenase patH converts it to m-hydroxybenzyl alcohol, which is further converted to gentisyl alcohol by the cytochrome P450 monooxygenase patI. The oxidoreductases patJ and patO further convert gentisyl alcohol to isoepoxydon in the vacuole. PatN catalyzes then the transformation of isoepoxydon into phyllostine. The cluster protein patF is responsible for the conversion from phyllostine to neopatulin whereas the alcohol dehydrogenase patD converts neopatulin to E-ascladiol. The steps between isoepoxydon and E-ascladiol occur in the cytosol, and E-ascladiol is probably secreted to the extracellular space by one of the cluster-specific transporters patC or patM. Finally, the secreted patulin synthase patE catalyzes the conversion of E-ascladiol to patulin. This is Alcohol dehydrogenase patD from Penicillium expansum (Blue mold rot fungus).